Consider the following 620-residue polypeptide: Preterminal protein (620 aa).

The Nuclear localization signal signature appears at 356-365 (RLPMRRRRRR). Ser545 is modified (O-(5'-phospho-DNA)-serine).

It belongs to the adenoviridae terminal protein family. In terms of assembly, heterodimer with the polymerase; this heterodimer binds to bp 9 to 18 of the genome. Interacts with host POU2F1; POU2F1 binds to the auxiliary sequences in the inverted terminal repeats and tethers the pTP-POL heterodimer to the origin DNA thereby participating in the assembly of the pre-initiation complex (POL-TP-DBP-NFIA-POU2F1). Post-translationally, preterminal protein is used to replicate viral genome, upon genomic encapsidation it is processed first into iTP and finally into TP by adenovirus protease.

The protein localises to the host nucleus matrix. Functionally, protein covalently bound to the viral DNA that acts as a primer for viral genomic replication by DNA strand displacement. Assembles on the viral origin of replication in an initiation complex with viral polymerase, DBP, host NFIA and host POU2F1/OCT1. During initiation, the polymerase covalently couples the first dCTP with Ser-580 of pTP. The terminal protein stimulates the template activity over 20 fold compared to protein-free templates. Neo-synthesized viral genomes are linked to two preterminal proteins, one for each 5' end. These new genomes are encapsidated in the nucleus, and during capsid maturation by viral protease, preterminal protein is first cleaved into intermediary (iTP), then into mature TP. May play a role in host nuclear matrix localization of genomic DNA. This chain is Preterminal protein, found in Bovine adenovirus 2 (BAdV-2).